The primary structure comprises 110 residues: Transmembrane protein 233 (110 aa).

Positions 1–32 (MSQYASRSDSKGALDSSSPEAYTEDDKTEEDI) are disordered. The Cytoplasmic portion of the chain corresponds to 1–42 (MSQYASRSDSKGALDSSSPEAYTEDDKTEEDIPAPSNYLWLT). The span at 22–32 (YTEDDKTEEDI) shows a compositional bias: acidic residues. The segment at residues 43-63 (IISCFCPAYPVNIVALVFSIM) is an intramembrane region (helical). The Cytoplasmic portion of the chain corresponds to 64 to 85 (SLNSYNDGDYEGARRLGRNAKW). Residues 86-106 (VAIASIIIGLVIIGVSCAVHF) traverse the membrane as a helical segment. Residues 107-110 (SRNP) are Extracellular-facing.

This sequence belongs to the CD225/Dispanin family. In terms of assembly, interacts with the giant stinging tree toxin ExTxA (P0DQP3). Interacts with Nav1.7/SCN9A. Interacts with Nav1.1/SCN1A, Nav1.2/SCN2A, Nav1.3/SCN3A, Nav1.4/SCN4A, Nav1.5/SCN5A, and Nav1.6/SCN8A. In terms of tissue distribution, probably expressed in nociceptive neurons. Detected in dorsal root ganglion neurons.

Its subcellular location is the membrane. Its function is as follows. Probable accessory protein of voltage-gated sodium channels. The chain is Transmembrane protein 233 from Mus musculus (Mouse).